The sequence spans 527 residues: Putative ABC transporter peptide-binding protein BOV_A0352 (527 aa).

The signal sequence occupies residues 1 to 23 (MRLRNFYSALALSAAVFAGPLYA).

The protein belongs to the bacterial solute-binding protein 5 family. As to quaternary structure, the complex is composed of two ATP-binding proteins (BOV_A0347 and BOV_A0348), two transmembrane proteins (BOV_A0350 and BOV_A0351) and a solute-binding protein (BOV_A0352).

Its subcellular location is the periplasm. In terms of biological role, probably part of an ABC transporter complex that could be involved in peptide import. In Brucella ovis (strain ATCC 25840 / 63/290 / NCTC 10512), this protein is Putative ABC transporter peptide-binding protein BOV_A0352.